Here is a 111-residue protein sequence, read N- to C-terminus: Putative splicing factor C222.18 (111 aa).

One can recognise an RRM domain in the interval 18 to 95 (HTLYIRNFGT…DIIFVEWAKS (78 aa)).

It belongs to the splicing factor SR family.

It is found in the nucleus. Functionally, has a role in pre-mRNA splicing where it is involved in spliceosome assembly. The protein is Putative splicing factor C222.18 of Schizosaccharomyces pombe (strain 972 / ATCC 24843) (Fission yeast).